We begin with the raw amino-acid sequence, 284 residues long: BTB/POZ domain-containing protein 2 (284 aa).

In terms of domain architecture, BTB spans Ser-37–Ala-108.

Interacts with cul3.

It localises to the cytoplasm. It is found in the nucleus. The protein operates within protein modification; protein ubiquitination. In terms of biological role, probable substrate-specific adapter of an E3 ubiquitin-protein ligase complex which mediates the ubiquitination and subsequent proteasomal degradation of target proteins. The polypeptide is BTB/POZ domain-containing protein 2 (btb2) (Schizosaccharomyces pombe (strain 972 / ATCC 24843) (Fission yeast)).